Consider the following 41-residue polypeptide: Large ribosomal subunit protein bL36 (41 aa).

This sequence belongs to the bacterial ribosomal protein bL36 family.

The sequence is that of Large ribosomal subunit protein bL36 from Phenylobacterium zucineum (strain HLK1).